Here is a 558-residue protein sequence, read N- to C-terminus: MARVEL domain-containing protein 2 (558 aa).

The span at 1 to 16 (MSNDGRSRNRDRRYDE) shows a compositional bias: basic and acidic residues. 2 disordered regions span residues 1 to 58 (MSND…PPFG) and 115 to 145 (CSPPASPARPNHRSPLNSCKDPYGGSEGTFS). Residues 1–194 (MSNDGRSRNR…YMKSWAGLLR (194 aa)) are Cytoplasmic-facing. Residues 45 to 58 (PLPPPPLPLQPPFG) are compositionally biased toward pro residues. Phosphoserine occurs at positions 116, 120, and 161. Thr166 bears the Phosphothreonine mark. Residues 188 to 367 (SWAGLLRILG…SALVCLKLWR (180 aa)) enclose the MARVEL domain. The chain crosses the membrane as a helical span at residues 195–215 (ILGVVELLLGAGVFACVTAYI). Topologically, residues 216–223 (HKDSEWYN) are extracellular. Residues 224-244 (LFGYSQPYGMGGVGGLGSMYG) traverse the membrane as a helical segment. Over 245–254 (GYYYTGPKTP) the chain is Cytoplasmic. A helical membrane pass occupies residues 255 to 275 (FVLVVAGLAWITTIIILVLGM). The Extracellular segment spans residues 276-291 (SMYYRTILLDSNWWPL). A helical transmembrane segment spans residues 292 to 312 (TEFGINVALFILYMAAAIVYV). The Cytoplasmic segment spans residues 313-319 (NDTNRGG). Residues 320 to 337 (LCYYPLFNTPVNAVFCRV) traverse the membrane as a helical segment. Residues 338–341 (EGGQ) lie on the Extracellular side of the membrane. The helical transmembrane segment at 342–362 (IAAMIFLFVTMIVYLISALVC) threads the bilayer. Residues 363-558 (LKLWRHEAAR…VMNWDVQGYS (196 aa)) lie on the Cytoplasmic side of the membrane. Residue Ser387 is modified to Phosphoserine. Lys412 is covalently cross-linked (Glycyl lysine isopeptide (Lys-Gly) (interchain with G-Cter in ubiquitin)). Residues 439-548 (MPDYVAKYPV…IKQRIQEYDK (110 aa)) adopt a coiled-coil conformation. The OCEL domain occupies 440-551 (PDYVAKYPVI…RIQEYDKVMN (112 aa)).

It belongs to the ELL/occludin family. As to quaternary structure, interacts with TJP1. Interacts with the ubiquitin ligase ITCH. Interacts (via C-terminal cytoplasmic domain) with LSR (via the cytoplasmic domain), ILDR1 and ILDR2; the interaction is required to recruit MARVELD2 to tricellular contacts. In terms of processing, ubiquitinated by ITCH; but this ubiquitination does not lead to proteasomal degradation. Polyubiquitinated at Lys-412 via 'Lys-63'-linked ubiquitin chains; deubiquitinated by USP53. Phosphorylated.

Its subcellular location is the cell membrane. The protein resides in the cell junction. It localises to the tight junction. Plays a role in the formation of tricellular tight junctions and of epithelial barriers. Required for normal hearing via its role in the separation of the endolymphatic and perilymphatic spaces of the organ of Corti in the inner ear, and for normal survival of hair cells in the organ of Corti. This is MARVEL domain-containing protein 2 from Homo sapiens (Human).